The following is a 635-amino-acid chain: S-type anion channel SLAH3 (635 aa).

At 1–253 the chain is on the cytoplasmic side; the sequence is MEEKPNYVIQ…IVLPNDKKWP (253 aa). The segment covering 102 to 121 has biased composition (polar residues); it reads SDPTTSLSSENHKNSGSTGK. The segment at 102 to 173 is disordered; the sequence is SDPTTSLSSE…SGHHQNQNQA (72 aa). A compositionally biased stretch (basic residues) spans 153 to 165; the sequence is NHHHHLHRQHQSG. A Phosphoserine modification is found at S189. The tract at residues 193 to 217 is disordered; sequence ERQFTRKPASVEPEAPNRNNQNLNT. A helical membrane pass occupies residues 254–276; sequence FLLRYPISTFGMCLGVSSQAIMW. The Extracellular segment spans residues 277–299; sequence KTLATAEPTKFLHVPLWINQGLW. A helical transmembrane segment spans residues 300-320; sequence FISVALILTIATIYLLKIILF. Over 321–335 the chain is Cytoplasmic; it reads FEAVRREYYHPIRIN. The helical transmembrane segment at 336–356 threads the bilayer; it reads FFFAPFISLLFLALGVPPSII. Residues 357–358 lie on the Extracellular side of the membrane; that stretch reads TD. A helical membrane pass occupies residues 359–379; that stretch reads LPHFLWYLLMFPFICLELKIY. Residues 380–396 lie on the Cytoplasmic side of the membrane; the sequence is GQWMSGGQRRLSRVANP. A helical membrane pass occupies residues 397-417; the sequence is TNHLSVVGNFVGALLGASMGL. Residues 418 to 419 are Extracellular-facing; sequence RE. Residues 420-440 form a helical membrane-spanning segment; sequence GPIFFYAVGMAHYLVLFVTLY. Topologically, residues 441–455 are cytoplasmic; sequence QRLPTNETLPKDLHP. Residues 456–476 form a helical membrane-spanning segment; it reads VFFLFVAAPSVASMAWAKVTG. Residue S477 is a topological domain, extracellular. A helical membrane pass occupies residues 478 to 498; the sequence is FDYGSKVCYFIAIFLYFSLAV. The Cytoplasmic portion of the chain corresponds to 499-504; that stretch reads RINFFR. The chain crosses the membrane as a helical span at residues 505 to 525; the sequence is GIKFSLSWWAYTFPMTGAAIA. The Extracellular portion of the chain corresponds to 526–541; sequence TIRYATVVKSTMTQIM. The helical transmembrane segment at 542-562 threads the bilayer; the sequence is CVVLCAIATLVVFALLVTTII. The Cytoplasmic portion of the chain corresponds to 563 to 635; that stretch reads HAFVLRDLFP…NGKTQESDSS (73 aa). The tract at residues 611-635 is disordered; sequence FTDSDSSQSNDVEACNGKTQESDSS. Polar residues predominate over residues 614-635; sequence SDSSQSNDVEACNGKTQESDSS.

Belongs to the SLAC1 S-type anion channel family. Homotrimer. Interacts with KAT1. As to expression, expressed in the whole plant, escpecially in vascular systems.

The protein localises to the cell membrane. Functionally, slow, weak voltage-dependent S-type anion efflux channel involved in maintenance of anion homeostasis. Binds to the highly selective inward-rectifying potassium channel KAT1 and inhibits its activity. Functions as an essential negative regulator of inward potassium channels in guard cells. Essential for the efficient stomatal closure and opening in guard cells. This is S-type anion channel SLAH3 (SLAH3) from Arabidopsis thaliana (Mouse-ear cress).